A 319-amino-acid chain; its full sequence is G-protein coupled receptor 55 (319 aa).

Over 1-21 the chain is Extracellular; it reads MSQQNTSGDCLFDGVNELMKT. N-linked (GlcNAc...) asparagine glycosylation is present at Asn-5. A helical transmembrane segment spans residues 22–42; that stretch reads LQFAVHIPTFVLGLLLNLLAI. Residues 43–58 are Cytoplasmic-facing; that stretch reads HGFSTFLKNRWPDYAA. A helical transmembrane segment spans residues 59-79; it reads TSIYMINLAVFDLLLVLSLPF. Residues 80 to 94 lie on the Extracellular side of the membrane; the sequence is KMVLSQVQSPFPSLC. The chain crosses the membrane as a helical span at residues 95–115; the sequence is TLVECLYFVSMYGSVFTICFI. Over 116–137 the chain is Cytoplasmic; the sequence is SMDRFLAIRYPLLVSHLRSPRK. A helical transmembrane segment spans residues 138–158; that stretch reads IFGICCTIWVLVWTGSIPIYS. Topologically, residues 159–180 are extracellular; sequence FHGKVEKYMCFHNMSDDTWSAK. Asn-171 is a glycosylation site (N-linked (GlcNAc...) asparagine). Residues 181-201 form a helical membrane-spanning segment; it reads VFFPLEVFGFLLPMGIMGFCC. Topologically, residues 202–231 are cytoplasmic; that stretch reads SRSIHILLGRRDHTQDWVQQKACIYSIAAS. A helical membrane pass occupies residues 232-252; sequence LAVFVVSFLPVHLGFFLQFLV. Residues 253 to 271 lie on the Extracellular side of the membrane; the sequence is RNSFIVECRAKQSISFFLQ. A helical transmembrane segment spans residues 272 to 292; it reads LSMCFSNVNCCLDVFCYYFVI. The Cytoplasmic portion of the chain corresponds to 293 to 319; sequence KEFRMNIRAHRPSRVQLVLQDTTISRG.

It belongs to the G-protein coupled receptor 1 family. In terms of tissue distribution, expressed in the caudate nucleus and putamen, but not detected in the hippocampus, thalamus, pons cerebellum, frontal cortex of the brain or in the liver. Expressed in osteoclasts and osteoblasts. Higly expressed in macrophages and B-cells.

It localises to the cell membrane. In terms of biological role, G-protein coupled receptor that binds to several ligands including 2-arachidonoyl lysophosphatidylinositol or lysophosphatidylglucoside with high affinity, leading to rapid and transient activation of numerous intracellular signaling pathways. Induces the Ca(2+) release from intracellular stores via ERK, the heterotrimeric G protein GNA13 and RHOA leading to morphological changes including cell rounding and stress fiber formation. In macrophages, acts downstream of lysophosphatidylglucoside to inhibit the translocation of the phospholipid-transporting ABCA1 to plasma membrane and subsequent cholesterol efflux leading to lipid accumulation and foam cell formation. In Homo sapiens (Human), this protein is G-protein coupled receptor 55 (GPR55).